A 354-amino-acid polypeptide reads, in one-letter code: Type II secretion system protein K (354 aa).

The propeptide at 1–7 (MSRRQRG) is leader sequence. Residues 8-28 (VALLIVMLMLSLMVTIAASIT) traverse the membrane as a helical segment. The Periplasmic segment spans residues 29-354 (ERSGKAWQRT…QYGGYRTVNP (326 aa)). Residues 114–151 (NVTPNNASGNNTSGNNNAANGSSGNGNSPQPPKVGTSE) are disordered. Residues 118 to 141 (NNASGNNTSGNNNAANGSSGNGNS) are compositionally biased toward low complexity.

Belongs to the GSP K family. As to quaternary structure, type II secretion is composed of four main components: the outer membrane complex, the inner membrane complex, the cytoplasmic secretion ATPase and the periplasm-spanning pseudopilus. Interacts with core component OutG. Cleaved by prepilin peptidase.

It is found in the cell inner membrane. Functionally, component of the type II secretion system required for the energy-dependent secretion of extracellular factors such as proteases and toxins from the periplasm. Plays a role in pseudopilus assembly and seems to control its length. Interacts with the pseudopilus tip complex that is critical for the recognition and binding of secretion substrates. This Dickeya chrysanthemi (Pectobacterium chrysanthemi) protein is Type II secretion system protein K (outK).